Consider the following 245-residue polypeptide: Histone deacetylase HDT1 (245 aa).

Met1 is modified (N-acetylmethionine). Required to repress transcription stretches follow at residues 2–5 (EFWG) and 101–162 (GYSE…EEEE). The tract at residues 99-245 (PQGYSEEEEE…HNKAKHAAAK (147 aa)) is disordered. Acidic residues predominate over residues 103 to 113 (SEEEEEEEEEV). Over residues 114–124 (PAGNAAKAVAK) the composition is skewed to low complexity. Residues 137–162 (DDEEDESDSDGMDEDDSDGEDSEEEE) are compositionally biased toward acidic residues. The span at 178–195 (TTPKAPVSAKKAKVAVTP) shows a compositional bias: low complexity. Over residues 208 to 234 (ANQSPKSASQVSCGSCKKTFNSGNALE) the composition is skewed to polar residues. Ser211 carries the phosphoserine modification. Residues 218 to 241 (VSCGSCKKTFNSGNALESHNKAKH) form a C2H2-type zinc finger.

The protein belongs to the histone deacetylase HD2 family. As to quaternary structure, interacts with DNMT2. Interacts with DEK3. Expressed in leaves, roots, stems, young plantlets, flowers and siliques. Highest levels in ovules, embryos, shoot apical meristems and first leaves. Also expressed in somatic embryos.

The protein resides in the nucleus. It is found in the nucleolus. Probably mediates the deacetylation of lysine residues on the N-terminal part of the core histones (H2A, H2B, H3 and H4). Histone deacetylation gives a tag for epigenetic repression and plays an important role in transcriptional regulation, cell cycle progression and developmental events. Required for histone H3 'Lys-9' deacetylation. Involved in rRNA gene silencing in nucleolar dominance. Seems to be implicated in the regulation of genes involved in seeds development. The polypeptide is Histone deacetylase HDT1 (Arabidopsis thaliana (Mouse-ear cress)).